Consider the following 546-residue polypeptide: MRTSRLTDLDLWKQLKAHAEKMALPENHLKHLTMAPERLAEFSIQALDMVYDFSRQRVDRQAIDLLMELAWERKVTQRFQAMTTGAVVNTTENRAALHTACRDFSKAKRVVNKIDVTAEMARVRKEIREFSEAVHAGQITGATGKPFAHVVVVGIGGSYLGTEFVARALAAYADKGICLHFLANVDIHNFGEIAEAIDPETTLWVIVSKSFTTAETMANANQAAAFMKEQGLDPARHFVSVTSKGSPGDQTGQDAPFPVLRSFHMFDFIGGRYSVTSAVGGVPLSLYLGYDRFETFLKGAHQMDVHAATAPPTTNMPLTAALLGIWNNNFLEYPAQAIIPYASPLARLAPHVQQLYMESNGKSVTAEGKPLGVRSGVIIFGEPGTNAQHSFFQLAHQGAPFPIDFIGVIKPQYDAFQALSRGVTNHQELWANLISQPRALAEGKESEDGHRSFSGNRPSSTILLEDLSPASVGKLLAFYEARTVYEAFVWGINPFDQYGVELGKKLASEIRSQMAAKNRDAGHTFENVDSISRFYLEKLMGKGNDE.

Glutamate 358 (proton donor) is an active-site residue. Residues histidine 389 and lysine 504 contribute to the active site.

Belongs to the GPI family.

The protein resides in the cytoplasm. The catalysed reaction is alpha-D-glucose 6-phosphate = beta-D-fructose 6-phosphate. The protein operates within carbohydrate biosynthesis; gluconeogenesis. Its pathway is carbohydrate degradation; glycolysis; D-glyceraldehyde 3-phosphate and glycerone phosphate from D-glucose: step 2/4. Functionally, catalyzes the reversible isomerization of glucose-6-phosphate to fructose-6-phosphate. This chain is Glucose-6-phosphate isomerase, found in Desulfosudis oleivorans (strain DSM 6200 / JCM 39069 / Hxd3) (Desulfococcus oleovorans).